Consider the following 381-residue polypeptide: E3 ubiquitin-protein ligase Fancl (381 aa).

The interval 110–293 is UBC-RWD region (URD); that stretch reads NIYYDILALY…MFDLCYFPMP (184 aa). Residues 303–374 form an RING-CH-type; degenerate zinc finger; sequence EEDNEELRCN…PFCKAKLSTS (72 aa). The Zn(2+) site is built by Cys311, Cys314, Cys329, Cys334, His339, Cys342, Cys364, and Cys367.

Interacts (via C-terminus) with FANCI and Fancd2.

It localises to the nucleus. The catalysed reaction is S-ubiquitinyl-[E2 ubiquitin-conjugating enzyme]-L-cysteine + [acceptor protein]-L-lysine = [E2 ubiquitin-conjugating enzyme]-L-cysteine + N(6)-ubiquitinyl-[acceptor protein]-L-lysine.. Its pathway is protein modification; protein ubiquitination. In terms of biological role, ubiquitin ligase protein that mediates monoubiquitination of Fancd2. Ubiquitination of Fancd2 is stimulated by ionising radiation. Together with Fancd2, and probably FANCI, involved in DNA repair of damage caused by agents that induce interstrand cross-links but not agents that cause double strand breaks. In Drosophila melanogaster (Fruit fly), this protein is E3 ubiquitin-protein ligase Fancl.